A 496-amino-acid polypeptide reads, in one-letter code: MRRATLIPLAIWVAGAAAAAAASLPQFPSCDISLANIGLSQNSQIFFPNGSGWESETIRWTKYMAPTYAVSVRPAHVSDVTQVRFATRCKIPFLASSGQHGFDTELAELQNGMEIDLSAFRNVSVDAKKNTLTVGGGVRFMDVFDPVFNAGKEIRTSETDHQVGTGSGACVGMISPTLGGGVGRLSGTHGIISDQLLSVQMVTANGSLVTVSKKENSNLFWGLRGAGGNFGIVVEAVYQVTDLTSEKVVNLDYAFSTNDTGAIIDYLALFGPNMPPKLSFIIAALYNEKLFGGVGDPGCVDPNRGRQSANTIPPSLFQFAVIVSGLYAGPQSEAEQLLAPLLQNATLIKQNISVVPENKLVYAATFGSQGNSTIACSGKGVNRSIFGGAINTYDKATYVDFLKAFGDLVTTNTDLRGSVFFIEHFSNYQVQKIPDHTSAYPWRDITAHLLFNYAWNDPANQQLMLYSARKLPRLRALKKEWDPENVFRFHHPISMS.

The signal sequence occupies residues 1 to 21 (MRRATLIPLAIWVAGAAAAAA). N-linked (GlcNAc...) asparagine glycosylation is found at Asn-49, Asn-122, Asn-205, Asn-258, Asn-344, Asn-351, Asn-371, and Asn-382. The 180-residue stretch at 64–243 (MAPTYAVSVR…VEAVYQVTDL (180 aa)) folds into the FAD-binding PCMH-type domain.

The protein belongs to the oxygen-dependent FAD-linked oxidoreductase family. It depends on FAD as a cofactor.

In terms of biological role, FAD-linked oxidoreductase; part of the gene cluster that mediates the biosynthesis of fumigermin that inhibits germination of spores of the inducing S.rapamycinicus, and thus helps the fungus to defend resources in the shared habitat against a bacterial competitor. The partially reducing polyketide synthase fngA alone is sufficient for the production of fumigermin. FgnA catalyzes the condensation of 3 malonyl-CoA units to an acetyl-CoA starter, and 3 methylations to yield fumigermin. It is remarkable that the five cluster genes including fgnA are conserved in distantly related fungi, supporting the assumption of a fumigermin cluster; it is thus possible that originally all five genes were functional, but that the genes encoding tailoring enzymes became inactive from mutations, similar to the case of the fgnA gene in strains A1163 and Af293. This is FAD-linked oxidoreductase AFUA_1G00980 from Aspergillus fumigatus (strain ATCC MYA-4609 / CBS 101355 / FGSC A1100 / Af293) (Neosartorya fumigata).